Consider the following 289-residue polypeptide: CCR4-associated factor 16 (289 aa).

The ABC transporter domain occupies Ile-7–Gly-249. ATP is bound at residue Gly-41–Ser-48.

The protein belongs to the ABC transporter superfamily. As to quaternary structure, interacts with CCR4 and SSN2.

The protein resides in the cytoplasm. The protein localises to the nucleus. In Saccharomyces cerevisiae (strain ATCC 204508 / S288c) (Baker's yeast), this protein is CCR4-associated factor 16 (CAF16).